Consider the following 658-residue polypeptide: Threonine--tRNA ligase (658 aa).

The TGS domain occupies 1-64; that stretch reads MSNTVSLQFP…GASGKVEIIT (64 aa). A catalytic region spans residues 246–548; it reads DHRRLGREMD…LIENFAGHMP (303 aa). Zn(2+) contacts are provided by Cys343, His394, and His525.

Belongs to the class-II aminoacyl-tRNA synthetase family. Homodimer. Requires Zn(2+) as cofactor.

It is found in the cytoplasm. The enzyme catalyses tRNA(Thr) + L-threonine + ATP = L-threonyl-tRNA(Thr) + AMP + diphosphate + H(+). Functionally, catalyzes the attachment of threonine to tRNA(Thr) in a two-step reaction: L-threonine is first activated by ATP to form Thr-AMP and then transferred to the acceptor end of tRNA(Thr). Also edits incorrectly charged L-seryl-tRNA(Thr). The chain is Threonine--tRNA ligase from Brucella melitensis biotype 1 (strain ATCC 23456 / CCUG 17765 / NCTC 10094 / 16M).